A 69-amino-acid polypeptide reads, in one-letter code: Proteinase inhibitor (69 aa).

Residue serine 1 is modified to N-acetylserine. A disulfide bridge links cysteine 4 with cysteine 49.

Its function is as follows. In vitro, strong inhibitor of bovine beta-trypsin, weak inhibitor of alpha-chymotrypsin, subtilisin BPN', subtilisin Carlsberg and cathepsin G. The protein is Proteinase inhibitor of Linum usitatissimum (Flax).